A 410-amino-acid polypeptide reads, in one-letter code: Multifunctional CCA protein (410 aa).

The ATP site is built by Gly-8 and Arg-11. Gly-8 and Arg-11 together coordinate CTP. Asp-21 and Asp-23 together coordinate Mg(2+). ATP is bound by residues Arg-91, Arg-138, and Arg-141. CTP is bound by residues Arg-91, Arg-138, and Arg-141. The region spanning 229–347 (TGIHQEMVSD…AQLALVCEAD (119 aa)) is the HD domain.

The protein belongs to the tRNA nucleotidyltransferase/poly(A) polymerase family. Bacterial CCA-adding enzyme type 1 subfamily. Monomer. Can also form homodimers and oligomers. Requires Mg(2+) as cofactor. Ni(2+) is required as a cofactor.

It catalyses the reaction a tRNA precursor + 2 CTP + ATP = a tRNA with a 3' CCA end + 3 diphosphate. It carries out the reaction a tRNA with a 3' CCA end + 2 CTP + ATP = a tRNA with a 3' CCACCA end + 3 diphosphate. Functionally, catalyzes the addition and repair of the essential 3'-terminal CCA sequence in tRNAs without using a nucleic acid template. Adds these three nucleotides in the order of C, C, and A to the tRNA nucleotide-73, using CTP and ATP as substrates and producing inorganic pyrophosphate. tRNA 3'-terminal CCA addition is required both for tRNA processing and repair. Also involved in tRNA surveillance by mediating tandem CCA addition to generate a CCACCA at the 3' terminus of unstable tRNAs. While stable tRNAs receive only 3'-terminal CCA, unstable tRNAs are marked with CCACCA and rapidly degraded. The protein is Multifunctional CCA protein of Xanthomonas euvesicatoria pv. vesicatoria (strain 85-10) (Xanthomonas campestris pv. vesicatoria).